A 131-amino-acid chain; its full sequence is Small ribosomal subunit protein eS24 (131 aa).

A disordered region spans residues 93–131 (RHGLYEKKKTSRKQRKERKNRMKKVRGTKKASVGAAGKK). The segment covering 101-121 (KTSRKQRKERKNRMKKVRGTK) has biased composition (basic residues).

This sequence belongs to the eukaryotic ribosomal protein eS24 family. As to quaternary structure, component of the small ribosomal subunit. Part of the small subunit (SSU) processome, composed of more than 70 proteins and the RNA chaperone small nucleolar RNA (snoRNA) U3.

Its subcellular location is the cytoplasm. The protein localises to the nucleus. The protein resides in the nucleolus. In terms of biological role, component of the small ribosomal subunit. The ribosome is a large ribonucleoprotein complex responsible for the synthesis of proteins in the cell. Required for processing of pre-rRNA and maturation of 40S ribosomal subunits. Part of the small subunit (SSU) processome, first precursor of the small eukaryotic ribosomal subunit. During the assembly of the SSU processome in the nucleolus, many ribosome biogenesis factors, an RNA chaperone and ribosomal proteins associate with the nascent pre-rRNA and work in concert to generate RNA folding, modifications, rearrangements and cleavage as well as targeted degradation of pre-ribosomal RNA by the RNA exosome. This Ictalurus punctatus (Channel catfish) protein is Small ribosomal subunit protein eS24 (rps24).